The following is a 470-amino-acid chain: Nucleoporin NUP49 (470 aa).

Polar residues predominate over residues 1–13 (MSLFGTNTTSQTP). Residues 1–92 (MSLFGTNTTS…STTTTTSQPQ (92 aa)) are disordered. GLFG repeat units follow at residues 17–20 (GLFG), 45–48 (GLFG), 63–66 (GLFG), 79–82 (GLFG), 96–99 (GLFG), 111–114 (GLFG), 127–130 (GLFG), 142–145 (GLFG), 156–159 (GLFG), 168–171 (GLFG), 181–184 (GLFG), and 193–197 (GLFGQ). The segment covering 20 to 31 (GTTTSQSAQTGS) has biased composition (low complexity). Residues 32–74 (LFGTATSQPQQTGGLFGSTATQTPSSQLQSTGLFGSTTATSQP) show a composition bias toward polar residues. Positions 75–92 (QQTGGLFGSTTTTTSQPQ) are enriched in low complexity. The interval 196 to 221 (GQSTTQPQQQQNATPGLTMGQSTNTQ) is disordered. Over residues 197–206 (QSTTQPQQQQ) the composition is skewed to low complexity. The span at 207–221 (NATPGLTMGQSTNTQ) shows a compositional bias: polar residues. Coiled-coil stretches lie at residues 239-270 (TRFN…EAVD) and 375-401 (FSKT…AHLT).

The protein belongs to the nucleoporin GLFG family. Component of the nuclear pore complex (NPC). NPC constitutes the exclusive means of nucleocytoplasmic transport. NPCs allow the passive diffusion of ions and small molecules and the active, nuclear transport receptor-mediated bidirectional transport of macromolecules such as proteins, RNAs, ribonucleoparticles (RNPs), and ribosomal subunits across the nuclear envelope. Due to its 8-fold rotational symmetry, all subunits are present with 8 copies or multiples thereof.

Its subcellular location is the nucleus. It is found in the nuclear pore complex. The protein resides in the nucleus membrane. Functions as a component of the nuclear pore complex (NPC). NPC components, collectively referred to as nucleoporins (NUPs), can play the role of both NPC structural components and of docking or interaction partners for transiently associated nuclear transport factors. Active directional transport is assured by both, a Phe-Gly (FG) repeat affinity gradient for these transport factors across the NPC and a transport cofactor concentration gradient across the nuclear envelope (GSP1 and GSP2 GTPases associated predominantly with GTP in the nucleus, with GDP in the cytoplasm). NUP49 plays an important role in several nuclear transport pathways including poly(A)+ RNA, tRNA, and pre-ribosome transport. This is Nucleoporin NUP49 (NUP49) from Chaetomium thermophilum (strain DSM 1495 / CBS 144.50 / IMI 039719) (Thermochaetoides thermophila).